Consider the following 563-residue polypeptide: (R)-mandelonitrile lyase 2 (563 aa).

Positions Met1–Ser27 are cleaved as a signal peptide. Residues Thr63–Ser64, Glu82–Arg83, Val129, Thr133, and Asn137–Val140 each bind FAD. N-linked (GlcNAc...) asparagine glycans are attached at residues Asn145 and Asn162. Val244 lines the FAD pocket. A substrate-binding site is contributed by Cys355. Asn379 and Asn419 each carry an N-linked (GlcNAc...) asparagine glycan. Residues Cys426 and Cys477 are joined by a disulfide bond. Tyr484 is a binding site for substrate. FAD contacts are provided by residues Trp485 to His486 and Gly514. Residue His486 is the Proton donor of the active site. Catalysis depends on His524, which acts as the Proton acceptor. Pro525–Gln526 contacts FAD.

Belongs to the GMC oxidoreductase family. In terms of assembly, monomer. FAD serves as cofactor. Glycosylated. Deglycosylation does not affect the enzymatic activity.

It carries out the reaction (R)-mandelonitrile = benzaldehyde + hydrogen cyanide. Functionally, involved in cyanogenesis, the release of HCN from injured tissues. Catalyzes the stereospecific addition of HCN to a variety of aldehydes in vitro. Has no oxidase activity. The redox properties of the FAD cofactor appear to be unimportant for catalysis. The protein is (R)-mandelonitrile lyase 2 (MDL2) of Prunus dulcis (Almond).